Here is an 817-residue protein sequence, read N- to C-terminus: Endoplasmin homolog (817 aa).

Positions 1–20 (MRKWTVPSVLFLLCPSLSSS) are cleaved as a signal peptide. The interval 31-58 (EADSDAPVDPPKVEDKIGAVPNGLSTDS) is disordered. Residues N111, D155, N168, and F200 each contribute to the ATP site. A glycan (N-linked (GlcNAc...) asparagine) is linked at N111. Residues 293-325 (VPAEEDDSSDDEDNKSESSSSEEGEEEETEKEE) show a composition bias toward acidic residues. The tract at residues 293–333 (VPAEEDDSSDDEDNKSESSSSEEGEEEETEKEEDEKKPKTK) is disordered. N-linked (GlcNAc...) asparagine glycans are attached at residues N306, N416, N456, and N624. Residues 777–817 (SPDATVEEEDDTEEAEAESGTTESSAAEDAGAETLDLKDEL) are disordered. Acidic residues predominate over residues 781–793 (TVEEEDDTEEAEA). Residues 794–805 (ESGTTESSAAED) show a composition bias toward low complexity. Residues 814–817 (KDEL) carry the Prevents secretion from ER motif.

The protein belongs to the heat shock protein 90 family. As to expression, not detected in extracts from young plants unless they are exposed to heat shock for several hours. Found to be constitutively expressed in cell cultures.

It localises to the endoplasmic reticulum lumen. Its function is as follows. May have a molecular chaperone role in the processing of secreted materials. This is Endoplasmin homolog (HSP90) from Catharanthus roseus (Madagascar periwinkle).